We begin with the raw amino-acid sequence, 522 residues long: Sugar transport protein MST2 (522 aa).

Topologically, residues 1–24 (MAAATAADVAEDTASVYSGKLTLY) are cytoplasmic. A helical membrane pass occupies residues 25 to 45 (VFLTCGVAATGGLIIGYDIGI). At 46–82 (SGGVTSMDTFLGKFFPSVLHQEQTAQGTSQYCKFNSQ) the chain is on the extracellular side. A helical membrane pass occupies residues 83–103 (PLTAFTSSLYLAALVASFFVA). Over 104–111 (SFTRALGR) the chain is Cytoplasmic. A helical transmembrane segment spans residues 112–132 (KWSMFGGGVSFLAGATLNGAA). Residues 133–134 (RN) lie on the Extracellular side of the membrane. The chain crosses the membrane as a helical span at residues 135–155 (VAMLIVGRILLGIGVAFCGLS). Residues 156 to 169 (TPIYLSEMAPPRLR) lie on the Cytoplasmic side of the membrane. The helical transmembrane segment at 170-190 (GMLNIGLQLMITVGIFSANLV) threads the bilayer. At 191–204 (NYGAAKIRGGWGWR) the chain is on the extracellular side. A helical transmembrane segment spans residues 205 to 225 (VSLGLAAAPACVIAVGSLFLP). At 226–291 (DSPSSLINRG…DVLQRRYRPQ (66 aa)) the chain is on the cytoplasmic side. The chain crosses the membrane as a helical span at residues 292–312 (LAMAVLIPFFQQLTGINVIMF). The Extracellular segment spans residues 313 to 329 (YAPVLFKTIGLGGDASL). The helical transmembrane segment at 330–350 (MSAVITGLVNIVATFVSIATV) threads the bilayer. The Cytoplasmic portion of the chain corresponds to 351–361 (DSLGRRKLLFQ). The chain crosses the membrane as a helical span at residues 362 to 382 (GGCQMLVSQVIIGTLIGVVFG). The Extracellular segment spans residues 383–391 (TSGDGNISR). Residues 392–412 (ALAVCIVVFICVYVAGFAWSW) traverse the membrane as a helical segment. The Cytoplasmic segment spans residues 413 to 434 (GPLGVLLPSEIFPLEVRPAGQS). Residues 435–455 (ISVAVNMLCTFAVAEAFLPML) form a helical membrane-spanning segment. Topologically, residues 456–459 (CHMR) are extracellular. A helical transmembrane segment spans residues 460–480 (FGLFYFFSGWVLVMTLFVSAF). Residues 481–522 (LPETKGVPIEKMTVVWRTHWFWGRFYCNQDADAHVQVANSKV) lie on the Cytoplasmic side of the membrane.

The protein belongs to the major facilitator superfamily. Sugar transporter (TC 2.A.1.1) family.

The protein localises to the membrane. Functionally, mediates active uptake of hexoses by sugar:proton symport. Can transport glucose. The polypeptide is Sugar transport protein MST2 (Oryza sativa subsp. japonica (Rice)).